The sequence spans 376 residues: 4-hydroxy-3-methylbut-2-en-1-yl diphosphate synthase (flavodoxin) (376 aa).

Residues C270, C273, C305, and E312 each contribute to the [4Fe-4S] cluster site.

This sequence belongs to the IspG family. [4Fe-4S] cluster serves as cofactor.

It carries out the reaction (2E)-4-hydroxy-3-methylbut-2-enyl diphosphate + oxidized [flavodoxin] + H2O + 2 H(+) = 2-C-methyl-D-erythritol 2,4-cyclic diphosphate + reduced [flavodoxin]. The protein operates within isoprenoid biosynthesis; isopentenyl diphosphate biosynthesis via DXP pathway; isopentenyl diphosphate from 1-deoxy-D-xylulose 5-phosphate: step 5/6. In terms of biological role, converts 2C-methyl-D-erythritol 2,4-cyclodiphosphate (ME-2,4cPP) into 1-hydroxy-2-methyl-2-(E)-butenyl 4-diphosphate. The chain is 4-hydroxy-3-methylbut-2-en-1-yl diphosphate synthase (flavodoxin) from Colwellia psychrerythraea (strain 34H / ATCC BAA-681) (Vibrio psychroerythus).